The chain runs to 132 residues: Small ribosomal subunit protein uS8 (132 aa).

Belongs to the universal ribosomal protein uS8 family. Part of the 30S ribosomal subunit. Contacts proteins S5 and S12.

Its function is as follows. One of the primary rRNA binding proteins, it binds directly to 16S rRNA central domain where it helps coordinate assembly of the platform of the 30S subunit. The polypeptide is Small ribosomal subunit protein uS8 (Brucella melitensis biotype 1 (strain ATCC 23456 / CCUG 17765 / NCTC 10094 / 16M)).